The sequence spans 121 residues: Flagellar hook-basal body complex protein FliE (121 aa).

This sequence belongs to the FliE family.

Its subcellular location is the bacterial flagellum basal body. This chain is Flagellar hook-basal body complex protein FliE, found in Treponema denticola (strain ATCC 35405 / DSM 14222 / CIP 103919 / JCM 8153 / KCTC 15104).